A 313-amino-acid chain; its full sequence is Formimidoylglutamase (313 aa).

Mn(2+) is bound by residues His-130, Asp-155, His-157, Asp-159, Asp-241, and Asp-243.

Belongs to the arginase family. Requires Mn(2+) as cofactor.

The catalysed reaction is N-formimidoyl-L-glutamate + H2O = formamide + L-glutamate. It participates in amino-acid degradation; L-histidine degradation into L-glutamate; L-glutamate from N-formimidoyl-L-glutamate (hydrolase route): step 1/1. In terms of biological role, catalyzes the conversion of N-formimidoyl-L-glutamate to L-glutamate and formamide. In Salmonella arizonae (strain ATCC BAA-731 / CDC346-86 / RSK2980), this protein is Formimidoylglutamase.